Consider the following 378-residue polypeptide: Cytochrome P450 monooxygenase pytD (378 aa).

Cys321 contacts heme.

It belongs to the cytochrome P450 family. The cofactor is heme.

It functions in the pathway secondary metabolite biosynthesis. In terms of biological role, cytochrome P450 monooxygenase pytD; part of the gene cluster that mediates the biosynthesis of pyranterreones, a family of antioxidative compounds. The first step of pyranonigrins biosynthesis is performed by the hybrid PKS-NRPS synthetase pytA that condenses 4 malonyl-CoA units ato the acetyl starter unit by the modular PKS of pytA. The acyl chain is then connected to an L-serine through the amide bond by the modular NRPS of pytA. A tetramic acid is formed and released from the PKS-NRPS pytA to give pyranterreone 5 with the help of the thioesterase pytI. Pyranterreone 5 could be methylated by pytC to afford pyranterreone 6. Both pyranterreones 5 and 6 are subsequently oxidized by the FAD-linked oxidoreductase pytB and the cytochrome P450 monooxygenase pytD to form the fused gamma-pyrone core, resulting in pyranterreones 7 and 11, respectively. The hydroxy group at C-8 of pyranterreones 7 and 11 are dehydrated by the aspartyl protease pytH to form a delta-7 double bond to give pyranterreones 3 and 1, 2 accordingly. The exo-methylene of pyranterreone 3 could be reduced into a pendant methyl by reductase pytE to provide pyranterreone 4, also known as cordylactam. Pyranterreone 4 can be reconverted to pyranterreone 3 through pytB-catalyzed dehydrogenation or further oxidized to pyranterreones 9 and 10. In Aspergillus terreus (strain NIH 2624 / FGSC A1156), this protein is Cytochrome P450 monooxygenase pytD.